The sequence spans 370 residues: 3-isopropylmalate dehydrogenase (370 aa).

Gly77–Glu90 serves as a coordination point for NAD(+). Substrate is bound by residues Arg97, Arg107, Arg135, and Asp226. The Mg(2+) site is built by Asp226, Asp250, and Asp254. Position 290-302 (Gly290–Asn302) interacts with NAD(+).

Belongs to the isocitrate and isopropylmalate dehydrogenases family. LeuB type 1 subfamily. Homodimer. Requires Mg(2+) as cofactor. Mn(2+) is required as a cofactor.

It is found in the cytoplasm. The catalysed reaction is (2R,3S)-3-isopropylmalate + NAD(+) = 4-methyl-2-oxopentanoate + CO2 + NADH. The protein operates within amino-acid biosynthesis; L-leucine biosynthesis; L-leucine from 3-methyl-2-oxobutanoate: step 3/4. Its function is as follows. Catalyzes the oxidation of 3-carboxy-2-hydroxy-4-methylpentanoate (3-isopropylmalate) to 3-carboxy-4-methyl-2-oxopentanoate. The product decarboxylates to 4-methyl-2 oxopentanoate. This Brucella abortus (strain 2308) protein is 3-isopropylmalate dehydrogenase.